The chain runs to 184 residues: NADH-quinone oxidoreductase subunit B (184 aa).

[4Fe-4S] cluster contacts are provided by C37, C38, C103, and C132.

The protein belongs to the complex I 20 kDa subunit family. In terms of assembly, NDH-1 is composed of 14 different subunits. Subunits NuoB, C, D, E, F, and G constitute the peripheral sector of the complex. It depends on [4Fe-4S] cluster as a cofactor.

Its subcellular location is the cell membrane. It carries out the reaction a quinone + NADH + 5 H(+)(in) = a quinol + NAD(+) + 4 H(+)(out). NDH-1 shuttles electrons from NADH, via FMN and iron-sulfur (Fe-S) centers, to quinones in the respiratory chain. The immediate electron acceptor for the enzyme in this species is believed to be a menaquinone. Couples the redox reaction to proton translocation (for every two electrons transferred, four hydrogen ions are translocated across the cytoplasmic membrane), and thus conserves the redox energy in a proton gradient. This Nocardioides sp. (strain ATCC BAA-499 / JS614) protein is NADH-quinone oxidoreductase subunit B.